Here is a 1457-residue protein sequence, read N- to C-terminus: Receptor-type tyrosine-protein phosphatase kappa (1457 aa).

The signal sequence occupies residues 1–25 (MDVAAAALPAFVALWLLYPWPLLGS). At 26–752 (ALGQFSAGGC…PAKQTDRVVK (727 aa)) the chain is on the extracellular side. Residues 30-193 (FSAGGCTFDD…IQVLSYPCDK (164 aa)) enclose the MAM domain. Residues Asn-100, Asn-139, and Asn-210 are each glycosylated (N-linked (GlcNAc...) asparagine). An Ig-like C2-type domain is found at 195–280 (PHFLRLGDVE…TQSERGSGVS (86 aa)). A disulfide bond links Cys-215 and Cys-269. Fibronectin type-III domains follow at residues 293 to 388 (PIAP…CAEP), 391 to 487 (TPKT…TDED), 490 to 594 (GPVP…SAPS), and 595 to 688 (LPDY…TVGD). N-linked (GlcNAc...) asparagine glycans are attached at residues Asn-415, Asn-423, Asn-435, Asn-461, Asn-551, Asn-585, Asn-589, Asn-606, and Asn-689. A helical membrane pass occupies residues 753-774 (IAGISAGILVFILLLLVVIVIV). At 775–1457 (KKSKLAKKRK…DVALEYLESS (683 aa)) the chain is on the cytoplasmic side. Ser-868 carries the post-translational modification Phosphoserine. Tyrosine-protein phosphatase domains lie at 899-1159 (FKEE…ILEA) and 1191-1453 (LKDE…ALEY). Residues Asp-1068, 1100-1106 (CSAGAGR), and Gln-1144 contribute to the substrate site. Cys-1100 (phosphocysteine intermediate) is an active-site residue. The active-site Phosphocysteine intermediate is the Cys-1394.

This sequence belongs to the protein-tyrosine phosphatase family. Receptor class 2B subfamily. Post-translationally, this protein undergoes proteolytic processing. As to expression, high levels in liver and kidney. Lower levels in lung, brain and heart. Not seen in spleen and testis.

It localises to the membrane. It catalyses the reaction O-phospho-L-tyrosyl-[protein] + H2O = L-tyrosyl-[protein] + phosphate. Its function is as follows. Regulation of processes involving cell contact and adhesion such as growth control, tumor invasion, and metastasis. Negative regulator of EGFR signaling pathway. Forms complexes with beta-catenin and gamma-catenin/plakoglobin. Beta-catenin may be a substrate for the catalytic activity of PTPRK/PTP-kappa. This chain is Receptor-type tyrosine-protein phosphatase kappa (Ptprk), found in Mus musculus (Mouse).